A 952-amino-acid chain; its full sequence is Disintegrin and metalloproteinase domain-containing protein adm-2 (952 aa).

Over 1–672 the chain is Extracellular; sequence MTDTLDLKLS…NEAYRFRGIT (672 aa). Residues Asn125 and Asn301 are each glycosylated (N-linked (GlcNAc...) asparagine). In terms of domain architecture, Peptidase M12B spans 177–373; it reads RFVELALVAD…GIDLCLFNEP (197 aa). 3 cysteine pairs are disulfide-bonded: Cys287/Cys368, Cys330/Cys352, and Cys332/Cys337. Residue His312 coordinates Zn(2+). Residue Glu313 is part of the active site. 2 residues coordinate Zn(2+): His316 and His322. Residues 379–466 form the Disintegrin domain; sequence DAKCGNGIVE…DCPADFFVQN (88 aa). Residue Asn406 is glycosylated (N-linked (GlcNAc...) asparagine). Disulfide bonds link Cys438/Cys458, Cys624/Cys634, Cys628/Cys640, and Cys642/Cys651. Residues 620 to 652 form the EGF-like domain; sequence VTAQCLDNCNFRGVCNNVGNCHCERGFGGIACE. A helical membrane pass occupies residues 673–693; sequence LSSTFLVFFCLFGIFIGGLCV. Topologically, residues 694-952 are cytoplasmic; it reads YYRVKRKRNL…AAIFDQKLKK (259 aa). 2 disordered regions span residues 778–809 and 829–938; these read IPMVTLKNPNLASPTPLLNPAEKEEQNQERAT and SFNT…EKVD. 2 stretches are compositionally biased toward basic and acidic residues: residues 798 to 809 and 849 to 873; these read AEKEEQNQERAT and PSDDVLSKLNEDLAKEKNAKFDRLN. A compositionally biased stretch (pro residues) spans 905–914; that stretch reads QAPPPPPPAH. Basic and acidic residues predominate over residues 925-938; it reads KVSEDAAATEEKVD.

The cofactor is Zn(2+). In terms of tissue distribution, expressed in hyp7 large epidermal syncytium (punctate distribution), seam cell syncytia, anterior epidermis, neurons located in the head, tail and central body, proximal oogenic cells (levels increasing in maturing oocytes) and myoepithelial cells of the spermatheca (at protein level). Not detected in mature sperm cells.

It is found in the cell membrane. The protein resides in the endosome membrane. Its subcellular location is the lysosome membrane. Functionally, metalloprotease that cleaves and releases a number of molecules. Negative regulator of lrp-1 protein levels, potentially by influencing its endosomal trafficking. Involved in regulating the molting process. This Caenorhabditis elegans protein is Disintegrin and metalloproteinase domain-containing protein adm-2.